A 279-amino-acid chain; its full sequence is MNYQDNSLKSLKLGQKTEYASQYDRTLLQPVPRALNRDGLGITQNQPFTIGADIWTAYEISWLNEKGLPQVAIADIYLDYQSQNLIESKSFKLYLNSFNQSKFTDFNAVQQTMQRDLIECAQGDVKVRLNPVAVYDAQKIEHLQGDCIDEQDIEITSYEFNANWLKDCVSDEIVEEKLVSHLLKSNCLITNQPDWGTLHIHYVGKKINHEKLLRYVVSFRQHNEFHEQCVERIFCDLMHYAKPEKLTVYARYTRRGGLDINPFRSNFENLPENLRLARQ.

Position 86–88 (86–88) interacts with substrate; it reads IES. Residue 88 to 89 participates in NADPH binding; that stretch reads SK. The Thioimide intermediate role is filled by Cys-187. Catalysis depends on Asp-194, which acts as the Proton donor. Substrate is bound at residue 226 to 227; the sequence is HE. NADPH is bound at residue 255–256; the sequence is RG.

This sequence belongs to the GTP cyclohydrolase I family. QueF type 2 subfamily. Homodimer.

It localises to the cytoplasm. The catalysed reaction is 7-aminomethyl-7-carbaguanine + 2 NADP(+) = 7-cyano-7-deazaguanine + 2 NADPH + 3 H(+). The protein operates within tRNA modification; tRNA-queuosine biosynthesis. In terms of biological role, catalyzes the NADPH-dependent reduction of 7-cyano-7-deazaguanine (preQ0) to 7-aminomethyl-7-deazaguanine (preQ1). The protein is NADPH-dependent 7-cyano-7-deazaguanine reductase of Haemophilus influenzae (strain PittGG).